Here is a 363-residue protein sequence, read N- to C-terminus: Protein-arginine kinase (363 aa).

Residues 24-254 (IVLSSRIRLA…AQLIEQERSA (231 aa)) enclose the Phosphagen kinase C-terminal domain. Residues 27–31 (SSRIR), His92, Arg125, 176–180 (RASVM), and 207–212 (RGIYGE) contribute to the ATP site. The RDXXRA motif of the pArg binding pocket involved in allosteric regulation signature appears at 337-342 (RDARRA).

The protein belongs to the ATP:guanido phosphotransferase family.

It carries out the reaction L-arginyl-[protein] + ATP = N(omega)-phospho-L-arginyl-[protein] + ADP + H(+). With respect to regulation, appears to be allosterically activated by the binding of pArg-containing polypeptides to the pArg-binding pocket localized in the C-terminal domain of McsB. Functionally, catalyzes the specific phosphorylation of arginine residues in a large number of proteins. Is part of the bacterial stress response system. Protein arginine phosphorylation has a physiologically important role and is involved in the regulation of many critical cellular processes, such as protein homeostasis, motility, competence, and stringent and stress responses, by regulating gene expression and protein activity. The polypeptide is Protein-arginine kinase (Bacillus velezensis (strain DSM 23117 / BGSC 10A6 / LMG 26770 / FZB42) (Bacillus amyloliquefaciens subsp. plantarum)).